The chain runs to 166 residues: Disulfide bond reductase DsbH (166 aa).

Residues 1–22 form the signal peptide; that stretch reads MKFWLQGCAFVGCLLLTLPCCA. A Thioredoxin domain is found at 32-166; the sequence is LQQTRPIAAA…SKVKSALKLR (135 aa). Cys72 and Cys75 are oxidised to a cystine. 73–74 contacts substrate; that stretch reads MW.

As to quaternary structure, monomer.

The protein localises to the periplasm. Its function is as follows. Catalyzes the reduction of disulfide bonds. May function in reducing intermolecular disulfides between proteins and small molecules in the periplasm, or keeping a specific subset of periplasmic proteins reduced, or maintaining the periplasm of Chlamydia in a generally reducing state. Seems to be unable to oxidize thiols into disulfides and does not display disulfide bond isomerase activity. The protein is Disulfide bond reductase DsbH (dsbH) of Chlamydia pneumoniae (Chlamydophila pneumoniae).